The following is a 691-amino-acid chain: Elongation factor G (691 aa).

Residues 8–283 (KKVRNIGIAA…AVVAYLPAPD (276 aa)) enclose the tr-type G domain. GTP is bound by residues 17–24 (AHIDAGKT), 81–85 (DTPGH), and 135–138 (NKMD).

This sequence belongs to the TRAFAC class translation factor GTPase superfamily. Classic translation factor GTPase family. EF-G/EF-2 subfamily.

The protein localises to the cytoplasm. Its function is as follows. Catalyzes the GTP-dependent ribosomal translocation step during translation elongation. During this step, the ribosome changes from the pre-translocational (PRE) to the post-translocational (POST) state as the newly formed A-site-bound peptidyl-tRNA and P-site-bound deacylated tRNA move to the P and E sites, respectively. Catalyzes the coordinated movement of the two tRNA molecules, the mRNA and conformational changes in the ribosome. The protein is Elongation factor G of Campylobacter jejuni subsp. jejuni serotype O:23/36 (strain 81-176).